Here is a 419-residue protein sequence, read N- to C-terminus: Elongation factor Tu, chloroplastic (419 aa).

The tr-type G domain maps to 10–214 (KPHVNIGTIG…AVDSYIPTPK (205 aa)). The segment at 19–26 (GHVDHGKT) is G1. GTP is bound at residue 19 to 26 (GHVDHGKT). Threonine 26 lines the Mg(2+) pocket. Positions 60 to 64 (GITIN) are G2. Residues 81 to 84 (DCPG) are G3. Residues 81–85 (DCPGH) and 136–139 (NKED) each bind GTP. The tract at residues 136–139 (NKED) is G4. The segment at 174 to 176 (SAL) is G5.

Belongs to the TRAFAC class translation factor GTPase superfamily. Classic translation factor GTPase family. EF-Tu/EF-1A subfamily.

Its subcellular location is the plastid. It is found in the chloroplast. The catalysed reaction is GTP + H2O = GDP + phosphate + H(+). Functionally, GTP hydrolase that promotes the GTP-dependent binding of aminoacyl-tRNA to the A-site of ribosomes during protein biosynthesis. This is Elongation factor Tu, chloroplastic (tufA) from Chara vulgaris (Common stonewort).